A 151-amino-acid chain; its full sequence is Transcriptional regulator MraZ (151 aa).

SpoVT-AbrB domains follow at residues 5–52 (ANAI…PLPE) and 81–124 (AVDL…DEDA).

The protein belongs to the MraZ family. As to quaternary structure, forms oligomers.

Its subcellular location is the cytoplasm. The protein resides in the nucleoid. This chain is Transcriptional regulator MraZ, found in Pseudomonas aeruginosa (strain LESB58).